A 304-amino-acid polypeptide reads, in one-letter code: Oxygen-dependent coproporphyrinogen-III oxidase (304 aa).

Residue Ser94 coordinates substrate. A divalent metal cation is bound by residues His98 and His108. His108 functions as the Proton donor in the catalytic mechanism. Residue 110–112 (NVR) coordinates substrate. Residues His147 and His177 each coordinate a divalent metal cation. Residues 242–277 (YVEFNLVYDRGTLFGLQTGGRTESILMSMPPLVRWE) form an important for dimerization region. 260-262 (GGR) contacts substrate.

It belongs to the aerobic coproporphyrinogen-III oxidase family. In terms of assembly, homodimer. A divalent metal cation is required as a cofactor.

The protein localises to the cytoplasm. It catalyses the reaction coproporphyrinogen III + O2 + 2 H(+) = protoporphyrinogen IX + 2 CO2 + 2 H2O. It functions in the pathway porphyrin-containing compound metabolism; protoporphyrin-IX biosynthesis; protoporphyrinogen-IX from coproporphyrinogen-III (O2 route): step 1/1. Involved in the heme biosynthesis. Catalyzes the aerobic oxidative decarboxylation of propionate groups of rings A and B of coproporphyrinogen-III to yield the vinyl groups in protoporphyrinogen-IX. The protein is Oxygen-dependent coproporphyrinogen-III oxidase of Shewanella pealeana (strain ATCC 700345 / ANG-SQ1).